The following is a 360-amino-acid chain: UDP-N-acetylglucosamine--N-acetylmuramyl-(pentapeptide) pyrophosphoryl-undecaprenol N-acetylglucosamine transferase (360 aa).

Residues 14–16 (TGG), asparagine 131, arginine 167, serine 195, isoleucine 249, and glutamine 294 contribute to the UDP-N-acetyl-alpha-D-glucosamine site.

This sequence belongs to the glycosyltransferase 28 family. MurG subfamily.

The protein localises to the cell inner membrane. The catalysed reaction is di-trans,octa-cis-undecaprenyl diphospho-N-acetyl-alpha-D-muramoyl-L-alanyl-D-glutamyl-meso-2,6-diaminopimeloyl-D-alanyl-D-alanine + UDP-N-acetyl-alpha-D-glucosamine = di-trans,octa-cis-undecaprenyl diphospho-[N-acetyl-alpha-D-glucosaminyl-(1-&gt;4)]-N-acetyl-alpha-D-muramoyl-L-alanyl-D-glutamyl-meso-2,6-diaminopimeloyl-D-alanyl-D-alanine + UDP + H(+). It functions in the pathway cell wall biogenesis; peptidoglycan biosynthesis. Cell wall formation. Catalyzes the transfer of a GlcNAc subunit on undecaprenyl-pyrophosphoryl-MurNAc-pentapeptide (lipid intermediate I) to form undecaprenyl-pyrophosphoryl-MurNAc-(pentapeptide)GlcNAc (lipid intermediate II). The protein is UDP-N-acetylglucosamine--N-acetylmuramyl-(pentapeptide) pyrophosphoryl-undecaprenol N-acetylglucosamine transferase of Polaromonas naphthalenivorans (strain CJ2).